Consider the following 98-residue polypeptide: Integration host factor subunit alpha (98 aa).

Residues 49–71 (FGNFDLRDKNQRPGRNPKTGEDI) form a disordered region.

It belongs to the bacterial histone-like protein family. Heterodimer of an alpha and a beta chain.

Its function is as follows. This protein is one of the two subunits of integration host factor, a specific DNA-binding protein that functions in genetic recombination as well as in transcriptional and translational control. This Shewanella sp. (strain ANA-3) protein is Integration host factor subunit alpha.